The primary structure comprises 248 residues: 23S rRNA (guanosine-2'-O-)-methyltransferase RlmB (248 aa).

S-adenosyl-L-methionine is bound by residues glycine 198, leucine 218, and leucine 227.

The protein belongs to the class IV-like SAM-binding methyltransferase superfamily. RNA methyltransferase TrmH family. RlmB subfamily.

The protein localises to the cytoplasm. It catalyses the reaction guanosine(2251) in 23S rRNA + S-adenosyl-L-methionine = 2'-O-methylguanosine(2251) in 23S rRNA + S-adenosyl-L-homocysteine + H(+). Specifically methylates the ribose of guanosine 2251 in 23S rRNA. The polypeptide is 23S rRNA (guanosine-2'-O-)-methyltransferase RlmB (Pseudomonas aeruginosa (strain ATCC 15692 / DSM 22644 / CIP 104116 / JCM 14847 / LMG 12228 / 1C / PRS 101 / PAO1)).